The following is a 205-amino-acid chain: LexA repressor (205 aa).

Positions 28 to 48 (RAEIATRLGFKSANAAEEHLK) form a DNA-binding region, H-T-H motif. Active-site for autocatalytic cleavage activity residues include serine 122 and lysine 159.

Belongs to the peptidase S24 family. As to quaternary structure, homodimer.

The enzyme catalyses Hydrolysis of Ala-|-Gly bond in repressor LexA.. Functionally, represses a number of genes involved in the response to DNA damage (SOS response), including recA and lexA. In the presence of single-stranded DNA, RecA interacts with LexA causing an autocatalytic cleavage which disrupts the DNA-binding part of LexA, leading to derepression of the SOS regulon and eventually DNA repair. The polypeptide is LexA repressor (Shewanella denitrificans (strain OS217 / ATCC BAA-1090 / DSM 15013)).